A 226-amino-acid polypeptide reads, in one-letter code: 2-C-methyl-D-erythritol 4-phosphate cytidylyltransferase (226 aa).

Belongs to the IspD/TarI cytidylyltransferase family. IspD subfamily.

It catalyses the reaction 2-C-methyl-D-erythritol 4-phosphate + CTP + H(+) = 4-CDP-2-C-methyl-D-erythritol + diphosphate. Its pathway is isoprenoid biosynthesis; isopentenyl diphosphate biosynthesis via DXP pathway; isopentenyl diphosphate from 1-deoxy-D-xylulose 5-phosphate: step 2/6. Catalyzes the formation of 4-diphosphocytidyl-2-C-methyl-D-erythritol from CTP and 2-C-methyl-D-erythritol 4-phosphate (MEP). The sequence is that of 2-C-methyl-D-erythritol 4-phosphate cytidylyltransferase from Clostridium beijerinckii (strain ATCC 51743 / NCIMB 8052) (Clostridium acetobutylicum).